A 728-amino-acid polypeptide reads, in one-letter code: Catalase-peroxidase 2 (728 aa).

Residues 1–20 (MSNEGKCPFNHGKRNGTTNR) are disordered. Positions 91–214 (WHSAGTYRTG…LAAVQMGLIY (124 aa)) form a cross-link, tryptophyl-tyrosyl-methioninium (Trp-Tyr) (with M-240). His-92 functions as the Proton acceptor in the catalytic mechanism. The segment at residues 214–240 (YVNPEGPNGNPDPLASARDIRETFARM) is a cross-link (tryptophyl-tyrosyl-methioninium (Tyr-Met) (with W-91)). Position 255 (His-255) interacts with heme b. The disordered stretch occupies residues 335-355 (AHQWQPKGGAGADSVPDPFEP).

This sequence belongs to the peroxidase family. Peroxidase/catalase subfamily. Homodimer or homotetramer. Heme b is required as a cofactor. Formation of the three residue Trp-Tyr-Met cross-link is important for the catalase, but not the peroxidase activity of the enzyme.

The catalysed reaction is H2O2 + AH2 = A + 2 H2O. The enzyme catalyses 2 H2O2 = O2 + 2 H2O. Functionally, bifunctional enzyme with both catalase and broad-spectrum peroxidase activity. The sequence is that of Catalase-peroxidase 2 from Burkholderia cenocepacia (strain HI2424).